The following is a 64-amino-acid chain: MAQEQTKRGGGGGDDDDIAGSTAAGQERREKLTEETDDLLDEIDDVLEENAEDFVRAYVQKGGQ.

Residues 1–37 are disordered; that stretch reads MAQEQTKRGGGGGDDDDIAGSTAAGQERREKLTEETD. Positions 21–58 are ARC ATPase binding; sequence STAAGQERREKLTEETDDLLDEIDDVLEENAEDFVRAY. Residues 23-52 adopt a coiled-coil conformation; the sequence is AAGQERREKLTEETDDLLDEIDDVLEENAE. At Gln-64 the chain carries Deamidated glutamine. Gln-64 participates in a covalent cross-link: Isoglutamyl lysine isopeptide (Gln-Lys) (interchain with K-? in acceptor proteins).

This sequence belongs to the prokaryotic ubiquitin-like protein family. In terms of assembly, strongly interacts with the proteasome-associated ATPase ARC through a hydrophobic interface; the interacting region of Pup lies in its C-terminal half. There is one Pup binding site per ARC hexamer ring. Is modified by deamidation of its C-terminal glutamine to glutamate by the deamidase Dop, a prerequisite to the subsequent pupylation process.

Its pathway is protein degradation; proteasomal Pup-dependent pathway. In terms of biological role, protein modifier that is covalently attached to lysine residues of substrate proteins, thereby targeting them for proteasomal degradation. The tagging system is termed pupylation. The chain is Prokaryotic ubiquitin-like protein Pup from Mycobacterium tuberculosis (strain ATCC 25177 / H37Ra).